A 429-amino-acid chain; its full sequence is Adenylosuccinate synthetase (429 aa).

Residues 12–18 (GDEGKGK) and 40–42 (GHT) contribute to the GTP site. Catalysis depends on D13, which acts as the Proton acceptor. Mg(2+) is bound by residues D13 and G40. Residues 13 to 16 (DEGK), 38 to 41 (NAGH), T128, R142, Q223, T238, and R302 each bind IMP. H41 acts as the Proton donor in catalysis. 298–304 (TTTGRAR) provides a ligand contact to substrate. GTP contacts are provided by residues R304, 330–332 (SID), and 412–414 (SVG).

Belongs to the adenylosuccinate synthetase family. As to quaternary structure, homodimer. The cofactor is Mg(2+).

Its subcellular location is the cytoplasm. It carries out the reaction IMP + L-aspartate + GTP = N(6)-(1,2-dicarboxyethyl)-AMP + GDP + phosphate + 2 H(+). It functions in the pathway purine metabolism; AMP biosynthesis via de novo pathway; AMP from IMP: step 1/2. In terms of biological role, plays an important role in the de novo pathway of purine nucleotide biosynthesis. Catalyzes the first committed step in the biosynthesis of AMP from IMP. This is Adenylosuccinate synthetase from Oceanobacillus iheyensis (strain DSM 14371 / CIP 107618 / JCM 11309 / KCTC 3954 / HTE831).